Here is a 355-residue protein sequence, read N- to C-terminus: LIM/homeobox protein lim-4 (355 aa).

2 LIM zinc-binding domains span residues 96–155 (VICT…THVT) and 166–228 (PKCA…LVEG). A DNA-binding region (homeobox) is located at residues 239-298 (TKRVRTTFAEDQLSVLQTYFNRDSNPDGADLEKIASMTGLSKRVTQVWFQNSRARQKKWH). Residues 291–336 (RARQKKWHQKSEGDNGDSQRSSVGPSSPSQKSDSSSEMMYPTSVTT) are disordered. Residues 306-326 (GDSQRSSVGPSSPSQKSDSSS) show a composition bias toward low complexity.

In terms of assembly, interacts with transcription factor sox-2. Expressed in the AWB sensory neurons and in one RME motor neuron (RMEV), two RMD motor neurons (RMDL and RMDR), the RID, RIV, SAA and SIA interneurons and the SMB sensory/inter/motor neurons.

Its subcellular location is the nucleus. Transcription factor that binds to the promoter of target genes. Regulates genes involved in serotonin synthesis and release in serotonergic ADF neurons. Involved in specification of neuron cell fate, olfactory receptor expression, locomotion, and foraging behavior. Required in AWB olfactory neurons to repress AWC cell fate and promote the AWB cell fate during early development. Cooperates with additional factors to direct the differentiation of the olfactory neurons, functioning with the transcription factor sox-2 to suppress AWC terminal differentiation and promote AWB neuron differentiation. Involved in regulating terminal specification and maintenance of the SMB sensory/inter/motor neurons. Plays a role in regulation of RID motor neuron differentiation, but is dispensable for motor axon outgrowth in the dorsal nerve cord. May regulate its own expression. The chain is LIM/homeobox protein lim-4 from Caenorhabditis elegans.